Reading from the N-terminus, the 351-residue chain is Putative F-box protein At5g52610 (351 aa).

The F-box domain occupies methionine 1–leucine 41.

This Arabidopsis thaliana (Mouse-ear cress) protein is Putative F-box protein At5g52610.